The chain runs to 373 residues: XK-related protein 9 (373 aa).

The next 8 membrane-spanning stretches (helical) occupy residues 8–28, 38–58, 166–186, 203–223, 224–244, 256–276, 295–315, and 318–338; these read FMMS…DIWV, YVFS…AQCF, AAIM…QVAL, ITYL…VVLL, LFLN…LGII, CISM…FTFF, VLGT…IFNP, and FIPI…FLIV.

This sequence belongs to the XK family. Post-translationally, undergoes proteolytic processing by caspase-3 (CASP3), caspase-6 (CASP6) and caspase-7 (CASP7) to generate the XK-related protein 9, processed form, leading to its activation.

It localises to the cell membrane. It catalyses the reaction a 1,2-diacyl-sn-glycero-3-phospho-L-serine(in) = a 1,2-diacyl-sn-glycero-3-phospho-L-serine(out). Activated upon caspase cleavage to generate the XK-related protein 9, processed form. Does not act prior the onset of apoptosis. Functionally, phospholipid scramblase that promotes phosphatidylserine exposure on apoptotic cell surface. Phosphatidylserine is a specific marker only present at the surface of apoptotic cells and acts as a specific signal for engulfment. The chain is XK-related protein 9 from Pan troglodytes (Chimpanzee).